The following is a 142-amino-acid chain: Small heat shock protein IbpB (142 aa).

The sHSP domain occupies 26 to 137 (AGESQSFPPY…APQRIAISER (112 aa)).

It belongs to the small heat shock protein (HSP20) family. As to quaternary structure, homodimer. Forms homomultimers of about 100-150 subunits at optimal growth temperatures. Conformation changes to oligomers at high temperatures or high ionic concentrations. The decrease in size of the multimers is accompanied by an increase in chaperone activity.

It is found in the cytoplasm. In terms of biological role, associates with aggregated proteins, together with IbpA, to stabilize and protect them from irreversible denaturation and extensive proteolysis during heat shock and oxidative stress. Aggregated proteins bound to the IbpAB complex are more efficiently refolded and reactivated by the ATP-dependent chaperone systems ClpB and DnaK/DnaJ/GrpE. Its activity is ATP-independent. The sequence is that of Small heat shock protein IbpB from Klebsiella pneumoniae subsp. pneumoniae (strain ATCC 700721 / MGH 78578).